A 631-amino-acid polypeptide reads, in one-letter code: Dolichyl-diphosphooligosaccharide--protein glycosyltransferase subunit 2 (631 aa).

The first 22 residues, Met-1 to Ala-22, serve as a signal peptide directing secretion. The Lumenal segment spans residues Leu-23–Val-540. Residue Asn-106 is glycosylated (N-linked (GlcNAc...) asparagine). Lys-154 is covalently cross-linked (Glycyl lysine isopeptide (Lys-Gly) (interchain with G-Cter in ubiquitin)). Residues Val-541–Ile-561 form a helical membrane-spanning segment. Over Arg-562–Thr-571 the chain is Cytoplasmic. Residues Phe-572–Val-592 traverse the membrane as a helical segment. The Lumenal segment spans residues Tyr-593–Gln-596. A helical transmembrane segment spans residues Leu-597–Gly-617. At Asn-618–His-631 the chain is on the cytoplasmic side.

This sequence belongs to the SWP1 family. Component of the oligosaccharyltransferase (OST) complex. OST exists in two different complex forms which contain common core subunits RPN1, RPN2, OST48, OST4, DAD1 and TMEM258, either STT3A or STT3B as catalytic subunits, and form-specific accessory subunits. STT3A complex assembly occurs through the formation of 3 subcomplexes. Subcomplex 1 contains RPN1 and TMEM258, subcomplex 2 contains the STT3A-specific subunits STT3A, DC2/OSTC, and KCP2 as well as the core subunit OST4, and subcomplex 3 contains RPN2, DAD1, and OST48. The STT3A complex can form stable complexes with the Sec61 complex or with both the Sec61 and TRAP complexes. Interacts with DDI2. Interacts with TMEM35A/NACHO.

The protein resides in the endoplasmic reticulum. Its subcellular location is the endoplasmic reticulum membrane. It functions in the pathway protein modification; protein glycosylation. Functionally, subunit of the oligosaccharyl transferase (OST) complex that catalyzes the initial transfer of a defined glycan (Glc(3)Man(9)GlcNAc(2) in eukaryotes) from the lipid carrier dolichol-pyrophosphate to an asparagine residue within an Asn-X-Ser/Thr consensus motif in nascent polypeptide chains, the first step in protein N-glycosylation. N-glycosylation occurs cotranslationally and the complex associates with the Sec61 complex at the channel-forming translocon complex that mediates protein translocation across the endoplasmic reticulum (ER). All subunits are required for a maximal enzyme activity. The sequence is that of Dolichyl-diphosphooligosaccharide--protein glycosyltransferase subunit 2 from Rattus norvegicus (Rat).